The sequence spans 149 residues: Large ribosomal subunit protein uL13 (149 aa).

This sequence belongs to the universal ribosomal protein uL13 family. In terms of assembly, part of the 50S ribosomal subunit.

In terms of biological role, this protein is one of the early assembly proteins of the 50S ribosomal subunit, although it is not seen to bind rRNA by itself. It is important during the early stages of 50S assembly. In Chlorobium chlorochromatii (strain CaD3), this protein is Large ribosomal subunit protein uL13.